A 120-amino-acid polypeptide reads, in one-letter code: Small ribosomal subunit protein bS16 (120 aa).

Residues 81-120 are disordered; it reads GLAKRPTRNNPQKAEPGEKAKERAAKRAEKAAAPAEDAAA. Residues 95-110 show a composition bias toward basic and acidic residues; that stretch reads EPGEKAKERAAKRAEK. Residues 111 to 120 show a composition bias toward low complexity; that stretch reads AAAPAEDAAA.

This sequence belongs to the bacterial ribosomal protein bS16 family.

This is Small ribosomal subunit protein bS16 from Methylorubrum extorquens (strain CM4 / NCIMB 13688) (Methylobacterium extorquens).